The following is a 378-amino-acid chain: Putative glutamate--cysteine ligase 2 (378 aa).

Belongs to the glutamate--cysteine ligase type 2 family. YbdK subfamily.

It catalyses the reaction L-cysteine + L-glutamate + ATP = gamma-L-glutamyl-L-cysteine + ADP + phosphate + H(+). ATP-dependent carboxylate-amine ligase which exhibits weak glutamate--cysteine ligase activity. This chain is Putative glutamate--cysteine ligase 2, found in Leifsonia xyli subsp. xyli (strain CTCB07).